A 533-amino-acid chain; its full sequence is Retinoid isomerohydrolase (533 aa).

Ser-2 is modified (N-acetylserine). The S-palmitoyl cysteine; in membrane form moiety is linked to residue Cys-112. Residue His-180 coordinates Fe cation. Cys-231 carries S-palmitoyl cysteine; in membrane form lipidation. Fe cation contacts are provided by His-241 and His-313. 2 S-palmitoyl cysteine; in membrane form lipidation sites follow: Cys-329 and Cys-330. Fe cation is bound at residue His-527.

The protein belongs to the carotenoid oxygenase family. It depends on Fe(2+) as a cofactor. Palmitoylation by LRAT regulates ligand binding specificity; the palmitoylated form (membrane form) specifically binds all-trans-retinyl-palmitate, while the soluble unpalmitoylated form binds all-trans-retinol (vitamin A). In terms of tissue distribution, retinal pigment epithelium specific.

Its subcellular location is the cell membrane. It catalyses the reaction an all-trans-retinyl ester + H2O = 11-cis-retinol + a fatty acid + H(+). It carries out the reaction lutein = (3R,3'S)-zeaxanthin. The catalysed reaction is all-trans-retinyl hexadecanoate + H2O = 11-cis-retinol + hexadecanoate + H(+). Functionally, critical isomerohydrolase in the retinoid cycle involved in regeneration of 11-cis-retinal, the chromophore of rod and cone opsins. Catalyzes the cleavage and isomerization of all-trans-retinyl fatty acid esters to 11-cis-retinol which is further oxidized by 11-cis retinol dehydrogenase to 11-cis-retinal for use as visual chromophore. Essential for the production of 11-cis retinal for both rod and cone photoreceptors. Also capable of catalyzing the isomerization of lutein to meso-zeaxanthin an eye-specific carotenoid. The soluble form binds vitamin A (all-trans-retinol), making it available for LRAT processing to all-trans-retinyl ester. The membrane form, palmitoylated by LRAT, binds all-trans-retinyl esters, making them available for IMH (isomerohydrolase) processing to all-cis-retinol. The soluble form is regenerated by transferring its palmitoyl groups onto 11-cis-retinol, a reaction catalyzed by LRAT. This is Retinoid isomerohydrolase (RPE65) from Cynops pyrrhogaster (Japanese fire-bellied newt).